The primary structure comprises 347 residues: ATPase GET3 (347 aa).

26-33 (KGGVGKTT) is an ATP binding site. The active site involves Asp-57. ATP is bound by residues Glu-240 and Asn-267. 2 residues coordinate Zn(2+): Cys-279 and Cys-282.

It belongs to the arsA ATPase family. Homodimer. Component of the Golgi to ER traffic (GET) complex, which is composed of GET1, GET2 and GET3. Within the complex, GET1 and GET2 form a heterotetramer which is stabilized by phosphatidylinositol binding and which binds to the GET3 homodimer. Interacts with the chloride channel protein GEF1.

It is found in the cytoplasm. It localises to the endoplasmic reticulum. The protein resides in the golgi apparatus. Its function is as follows. ATPase required for the post-translational delivery of tail-anchored (TA) proteins to the endoplasmic reticulum. Recognizes and selectively binds the transmembrane domain of TA proteins in the cytosol. This complex then targets to the endoplasmic reticulum by membrane-bound receptors GET1 and GET2, where the tail-anchored protein is released for insertion. This process is regulated by ATP binding and hydrolysis. ATP binding drives the homodimer towards the closed dimer state, facilitating recognition of newly synthesized TA membrane proteins. ATP hydrolysis is required for insertion. Subsequently, the homodimer reverts towards the open dimer state, lowering its affinity for the GET1-GET2 receptor, and returning it to the cytosol to initiate a new round of targeting. Cooperates with the HDEL receptor ERD2 to mediate the ATP-dependent retrieval of resident ER proteins that contain a C-terminal H-D-E-L retention signal from the Golgi to the ER. Involved in low-level resistance to the oxyanions arsenite and arsenate, and in heat tolerance. This is ATPase GET3 from Scheffersomyces stipitis (strain ATCC 58785 / CBS 6054 / NBRC 10063 / NRRL Y-11545) (Yeast).